Consider the following 420-residue polypeptide: Phospholipase A1-II 3 (420 aa).

Residues 1–21 (MCCFLLVSVLLATTLTDVASA) form the signal peptide. N-linked (GlcNAc...) asparagine glycosylation is present at asparagine 231. Serine 240 functions as the Acyl-ester intermediate in the catalytic mechanism. Catalysis depends on serine 240, which acts as the Charge relay system. Residue asparagine 294 is glycosylated (N-linked (GlcNAc...) asparagine). Residues aspartate 305 and histidine 343 each act as charge relay system in the active site. A coiled-coil region spans residues 367–388 (VVDRDLALVNKEVDALRDEYQV). The N-linked (GlcNAc...) asparagine glycan is linked to asparagine 403.

Belongs to the AB hydrolase superfamily. Lipase family.

Its subcellular location is the secreted. Functionally, acylhydrolase that catalyzes the hydrolysis of phospholipids at the sn-1 position. The chain is Phospholipase A1-II 3 from Oryza sativa subsp. japonica (Rice).